The following is a 432-amino-acid chain: MGKNVVVLGTQWGDEGKGKIVDLLTERAKYVVRYQGGHNAGHTLVINGEKTVLHLIPSGILRENVISIIANGVVLAPDALMKEMNALESRGIPVRERLLISEACPLILPYHVALDNAREKARGAKAIGTTGRGIGPAYEDKVARRGLRVGDLFDKEAFAVKLKEIIEYHNFQLVNYYKEPAVDYQKTLDEIMAVADILTDMVVDVSDLLYKATQKGELVMFEGAQGTLLDIDHGTYPYVTSSNTTAGGVATGSGLGPCYVDYVLGIIKAYSTRVGAGPFPTELFDETGGYLREKGQEFGATTGRSRRTGWLDIIAIRRAVQINSLSGFCMTKLDVLDGLKEVKICTGYRMPDGSVIETTPLAADDWEGIEPVYETMPGWNESTFGVKEHRKLPQAALNYIKRVEELTGVPVDIISTGPDRSETIILRDPFDA.

Residues 13–19 and 41–43 each bind GTP; these read GDEGKGK and GHT. The active-site Proton acceptor is Asp14. 2 residues coordinate Mg(2+): Asp14 and Gly41. Residues 14–17, 39–42, Thr130, Arg144, Gln225, Thr240, and Arg304 each bind IMP; these read DEGK and NAGH. Catalysis depends on His42, which acts as the Proton donor. Position 300 to 306 (300 to 306) interacts with substrate; that stretch reads ATTGRSR. Residues Arg306, 332-334, and 415-417 contribute to the GTP site; these read KLD and STG.

Belongs to the adenylosuccinate synthetase family. Homodimer. Mg(2+) serves as cofactor.

The protein localises to the cytoplasm. It catalyses the reaction IMP + L-aspartate + GTP = N(6)-(1,2-dicarboxyethyl)-AMP + GDP + phosphate + 2 H(+). It participates in purine metabolism; AMP biosynthesis via de novo pathway; AMP from IMP: step 1/2. Its function is as follows. Plays an important role in the de novo pathway of purine nucleotide biosynthesis. Catalyzes the first committed step in the biosynthesis of AMP from IMP. This chain is Adenylosuccinate synthetase 2, found in Photorhabdus laumondii subsp. laumondii (strain DSM 15139 / CIP 105565 / TT01) (Photorhabdus luminescens subsp. laumondii).